The primary structure comprises 522 residues: Glutamate--cysteine ligase (522 aa).

Belongs to the glutamate--cysteine ligase type 1 family. Type 1 subfamily.

The enzyme catalyses L-cysteine + L-glutamate + ATP = gamma-L-glutamyl-L-cysteine + ADP + phosphate + H(+). It functions in the pathway sulfur metabolism; glutathione biosynthesis; glutathione from L-cysteine and L-glutamate: step 1/2. This is Glutamate--cysteine ligase from Shewanella halifaxensis (strain HAW-EB4).